Here is a 136-residue protein sequence, read N- to C-terminus: Large ribosomal subunit protein uL16c (136 aa).

A disordered region spans residues 1 to 20 (MLSPKRTRFRKQHRGRMKGK).

Belongs to the universal ribosomal protein uL16 family. In terms of assembly, part of the 50S ribosomal subunit.

Its subcellular location is the plastid. The protein resides in the chloroplast. This is Large ribosomal subunit protein uL16c from Lolium perenne (Perennial ryegrass).